Reading from the N-terminus, the 156-residue chain is Small ribosomal subunit protein uS7 (156 aa).

This sequence belongs to the universal ribosomal protein uS7 family. As to quaternary structure, part of the 30S ribosomal subunit. Contacts proteins S9 and S11.

Functionally, one of the primary rRNA binding proteins, it binds directly to 16S rRNA where it nucleates assembly of the head domain of the 30S subunit. Is located at the subunit interface close to the decoding center, probably blocks exit of the E-site tRNA. The sequence is that of Small ribosomal subunit protein uS7 from Alkaliphilus oremlandii (strain OhILAs) (Clostridium oremlandii (strain OhILAs)).